A 379-amino-acid chain; its full sequence is Retinoic acid receptor RXR-alpha-B (379 aa).

A compositionally biased stretch (polar residues) spans 1-22 (MPVPEQKQTVQLSSPMNAVSSS). The segment at 1 to 24 (MPVPEQKQTVQLSSPMNAVSSSED) is disordered. The interval 1 to 53 (MPVPEQKQTVQLSSPMNAVSSSEDIKPPLGLNGVMKVPAHRIGTLSLSLTKHI) is modulating. Positions 51-126 (KHICAICGDR…MGMKREAVQE (76 aa)) form a DNA-binding region, nuclear receptor. Zn(2+)-binding residues include Cys-54, Cys-57, Cys-71, and Cys-74. Residues 54–74 (CAICGDRSSGKHYGVYSCEGC) form an NR C4-type zinc finger. The tract at residues 79 to 84 (KRTVRK) is nuclear localization signal. 4 residues coordinate Zn(2+): Cys-90, Cys-96, Cys-106, and Cys-109. Residues 90-109 (CRDNKDCMIDKRQRNRCQYC) form an NR C4-type zinc finger. The tract at residues 120 to 141 (KREAVQEERQRAKERSEAEFGG) is hinge. An NR LBD domain is found at 144 to 375 (NEDMPVEKIL…TFLMEMLEAP (232 aa)). Residues Arg-233 and Ala-244 each coordinate 9-cis-retinoate. All-trans-retinoate is bound by residues Arg-233 and Ala-244. The required for nuclear export stretch occupies residues 265–285 (RVLTELVSKMRDMQMDKTELG). The interval 364-375 (IDTFLMEMLEAP) is AF-2.

This sequence belongs to the nuclear hormone receptor family. NR2 subfamily. As to quaternary structure, homodimer. Heterodimer; with a rar molecule. Binds DNA preferentially as a rar/rxr heterodimer. In terms of tissue distribution, uniform expression from the blastula to mid-gastrula stages. At 12 hours post-fertilization (hpf), expressed strongly in the tail and weakly elsewhere. At 24 hpf, weak expression in the forebrain, eyes and pharyngeal endoderm and continued expression in the tail mesoderm. At 48 hpf, anterior expression limited to ventral cells underlying the head, medial expression in the pectoral fin bud mesoderm and continued tail expression.

The protein resides in the nucleus. Functionally, receptor for retinoic acid that acts as a transcription factor. Forms homo- or heterodimers with retinoic acid receptors (rars) and binds to target response elements in response to their ligands, all-trans or 9-cis retinoic acid, to regulate gene expression in various biological processes. The rar/rxr heterodimers bind to the retinoic acid response elements (RARE) composed of tandem 5'-AGGTCA-3' sites known as DR1-DR5 to regulate transcription. The high affinity ligand for rxrs is 9-cis retinoic acid. In the absence of ligand, the rar/rxr heterodimers associate with a multiprotein complex containing transcription corepressors that induce histone deacetylation, chromatin condensation and transcriptional suppression. On ligand binding, the corepressors dissociate from the receptors and coactivators are recruited leading to transcriptional activation. The protein is Retinoic acid receptor RXR-alpha-B (rxrab) of Danio rerio (Zebrafish).